The chain runs to 109 residues: Flagellar hook-basal body complex protein FliE (109 aa).

Belongs to the FliE family.

The protein resides in the bacterial flagellum basal body. The chain is Flagellar hook-basal body complex protein FliE from Stutzerimonas stutzeri (strain A1501) (Pseudomonas stutzeri).